The primary structure comprises 486 residues: Homoserine O-acetyltransferase (486 aa).

Residues 66-436 (NVLVICHALT…PEGHDAFLLE (371 aa)) enclose the AB hydrolase-1 domain. S162 acts as the Nucleophile in catalysis. The tract at residues 248 to 281 (KFSRRSPSIAQQQKAQREETRKPSTVSEHSLQIH) is disordered. Polar residues-rich tracts occupy residues 250-261 (SRRSPSIAQQQK) and 270-280 (PSTVSEHSLQI). Residues D401 and H430 contribute to the active site.

Belongs to the AB hydrolase superfamily. MetX family.

The protein resides in the cytoplasm. The catalysed reaction is L-homoserine + acetyl-CoA = O-acetyl-L-homoserine + CoA. It functions in the pathway amino-acid biosynthesis; L-methionine biosynthesis via de novo pathway; O-acetyl-L-homoserine from L-homoserine: step 1/1. Commits homoserine to the methionine biosynthesis pathway by catalyzing its O-acetylation. The sequence is that of Homoserine O-acetyltransferase (MET2) from Saccharomyces cerevisiae (strain ATCC 204508 / S288c) (Baker's yeast).